The sequence spans 235 residues: 5'-methylthioadenosine/S-adenosylhomocysteine nucleosidase (235 aa).

Glutamate 13 (proton acceptor) is an active-site residue. Residues glycine 79, methionine 154, and 175 to 176 (ME) each bind substrate. Aspartate 199 acts as the Proton donor in catalysis.

It belongs to the PNP/UDP phosphorylase family. MtnN subfamily.

It catalyses the reaction S-adenosyl-L-homocysteine + H2O = S-(5-deoxy-D-ribos-5-yl)-L-homocysteine + adenine. The catalysed reaction is S-methyl-5'-thioadenosine + H2O = 5-(methylsulfanyl)-D-ribose + adenine. It carries out the reaction 5'-deoxyadenosine + H2O = 5-deoxy-D-ribose + adenine. Its pathway is amino-acid biosynthesis; L-methionine biosynthesis via salvage pathway; S-methyl-5-thio-alpha-D-ribose 1-phosphate from S-methyl-5'-thioadenosine (hydrolase route): step 1/2. In terms of biological role, catalyzes the irreversible cleavage of the glycosidic bond in both 5'-methylthioadenosine (MTA) and S-adenosylhomocysteine (SAH/AdoHcy) to adenine and the corresponding thioribose, 5'-methylthioribose and S-ribosylhomocysteine, respectively. Also cleaves 5'-deoxyadenosine, a toxic by-product of radical S-adenosylmethionine (SAM) enzymes, into 5-deoxyribose and adenine. This is 5'-methylthioadenosine/S-adenosylhomocysteine nucleosidase from Chromohalobacter salexigens (strain ATCC BAA-138 / DSM 3043 / CIP 106854 / NCIMB 13768 / 1H11).